Consider the following 546-residue polypeptide: Alpha-isocomene synthase (546 aa).

Positions 299, 303, 443, and 451 each coordinate Mg(2+). The DDXXD motif signature appears at 299-303 (DDTYD).

It belongs to the terpene synthase family. Tpsa subfamily. Mg(2+) is required as a cofactor. Requires Mn(2+) as cofactor. Highly expressed in roots, lower levels in stems and leaves and detected in disk florets, but not in ray florets.

It catalyses the reaction (2E,6E)-farnesyl diphosphate = (-)-alpha-isocomene + diphosphate. It functions in the pathway secondary metabolite biosynthesis; terpenoid biosynthesis. Sesquiterpene synthase involved in the biosynthesis of alpha-isocomene as the major product and detectable amounts of beta-caryophyllene, beta-isocomene, silphinene and modeph-2-ene. Produces exclusively the (-)-(E)-beta caryophyllene enantiomer. This chain is Alpha-isocomene synthase, found in Matricaria chamomilla var. recutita (German chamomile).